A 474-amino-acid chain; its full sequence is Rhodanese-like domain-containing protein 7 (474 aa).

Disordered regions lie at residues 20–68 (SSPP…SSLK) and 179–198 (VSPEQEAIHHGHSSSSPLAA). Residues 53 to 68 (QSQPHKLSSSPSSSLK) are compositionally biased toward low complexity. The Rhodanese domain maps to 245–368 (SDPETVVIDV…YLEEVPKTES (124 aa)). Cys328 functions as the Cysteine persulfide intermediate in the catalytic mechanism. Residues 432–474 (RARARQTQFEEWGVIGGPDKGRRPATKPDSPRKKINAKLGSSI) are disordered.

This is Rhodanese-like domain-containing protein 7 (STR7) from Arabidopsis thaliana (Mouse-ear cress).